The following is an 88-amino-acid chain: RNA-binding protein Hfq (88 aa).

Residues 9-68 (DPFLNALRRERIPVSIYLVNGIKLQGQIESFDQFVILLKNTVNQMVYKHAISTVVPARAV) form the Sm domain. The interval 66 to 88 (RAVSHHSGEQQRAPSDRPEKTED) is disordered. The span at 71–88 (HSGEQQRAPSDRPEKTED) shows a compositional bias: basic and acidic residues.

This sequence belongs to the Hfq family. As to quaternary structure, homohexamer.

Its function is as follows. RNA chaperone that binds small regulatory RNA (sRNAs) and mRNAs to facilitate mRNA translational regulation in response to envelope stress, environmental stress and changes in metabolite concentrations. Also binds with high specificity to tRNAs. The protein is RNA-binding protein Hfq of Vibrio atlanticus (strain LGP32) (Vibrio splendidus (strain Mel32)).